Here is a 432-residue protein sequence, read N- to C-terminus: Adenylosuccinate synthetase (432 aa).

Residues 12–18 (GDEGKGK) and 40–42 (GHT) contribute to the GTP site. Catalysis depends on Asp-13, which acts as the Proton acceptor. Mg(2+)-binding residues include Asp-13 and Gly-40. IMP-binding positions include 13–16 (DEGK), 38–41 (NAGH), Thr-133, Arg-147, Gln-228, Thr-243, and Arg-307. His-41 (proton donor) is an active-site residue. 303–309 (TTTGRPR) serves as a coordination point for substrate. Residues Arg-309, 335 to 337 (KLD), and 417 to 419 (GVG) each bind GTP.

It belongs to the adenylosuccinate synthetase family. Homodimer. Requires Mg(2+) as cofactor.

The protein resides in the cytoplasm. It catalyses the reaction IMP + L-aspartate + GTP = N(6)-(1,2-dicarboxyethyl)-AMP + GDP + phosphate + 2 H(+). It functions in the pathway purine metabolism; AMP biosynthesis via de novo pathway; AMP from IMP: step 1/2. Its function is as follows. Plays an important role in the de novo pathway of purine nucleotide biosynthesis. Catalyzes the first committed step in the biosynthesis of AMP from IMP. The polypeptide is Adenylosuccinate synthetase (Nocardioides sp. (strain ATCC BAA-499 / JS614)).